The sequence spans 345 residues: NADPH dehydrogenase (345 aa).

23–26 (SPMC) is an FMN binding site. Y28 lines the substrate pocket. The FMN site is built by A60 and Q102. 164–167 (HGAH) is a binding site for substrate. FMN-binding positions include R215 and 307–308 (GR).

This sequence belongs to the NADH:flavin oxidoreductase/NADH oxidase family. NamA subfamily. Homotetramer. FMN is required as a cofactor.

The catalysed reaction is A + NADPH + H(+) = AH2 + NADP(+). Its function is as follows. Catalyzes the reduction of the double bond of an array of alpha,beta-unsaturated aldehydes and ketones. It also reduces the nitro group of nitroester and nitroaromatic compounds. It could have a role in detoxification processes. The protein is NADPH dehydrogenase of Bacillus cereus (strain ATCC 14579 / DSM 31 / CCUG 7414 / JCM 2152 / NBRC 15305 / NCIMB 9373 / NCTC 2599 / NRRL B-3711).